The following is a 302-amino-acid chain: Glycine N-acyltransferase-like protein 1 (302 aa).

This sequence belongs to the glycine N-acyltransferase family. Expressed in liver and kidney and, at lower levels, in pancreas, testis, ovary and stomach.

The catalysed reaction is an acyl-CoA + L-glutamine = an N(2)-acyl-L-glutamine + CoA + H(+). Its function is as follows. Acyltransferase which transfers an acyl group to the N-terminus of glutamine. Can use phenylacetyl-CoA as an acyl donor. The polypeptide is Glycine N-acyltransferase-like protein 1 (Homo sapiens (Human)).